The chain runs to 170 residues: Sec-independent protein translocase protein TATA, chloroplastic (170 aa).

Residues 1-61 constitute a chloroplast transit peptide; it reads MGIPVVVPVA…GGSGGDLAAV (61 aa). The Lumenal portion of the chain corresponds to 62-84; that stretch reads AASVAARPRRAGSGGGGALGCKC. Residues 85–105 form a helical membrane-spanning segment; the sequence is LFGLGVPELAVIAGVAALVFG. Residues 106–170 are Stromal-facing; that stretch reads PKQLPEIGRS…LEASSSKESA (65 aa). Residues 130 to 139 show a composition bias toward basic and acidic residues; it reads FETELKKEPG. The disordered stretch occupies residues 130–170; that stretch reads FETELKKEPGEGGDQPPPATPTAVSGGEEKGLEASSSKESA.

Belongs to the TatA/E family. In thylakoid membranes, TATC and TATB form a large receptor complex, containing about eight TATC-TATB pairs, which binds the precursor protein. Twin arginine signal peptide promotes pH-triggered docking of TATA oligomers to TATC-TATB receptor complex, inducing a conformational switch of TATA that results in activation of the translocase. TATA dissociates from TATC-TATB upon completion of translocation.

The protein localises to the plastid. It is found in the chloroplast thylakoid membrane. Functionally, part of the twin-arginine translocation (Tat) system that transports large folded proteins containing a characteristic twin-arginine motif in their signal peptide across the thylakoid membrane. Involved in delta pH-dependent protein transport required for chloroplast development, especially thylakoid membrane formation. TATC and TATB mediate precursor recognition, whereas TATA facilitates translocation. The protein is Sec-independent protein translocase protein TATA, chloroplastic of Zea mays (Maize).